Reading from the N-terminus, the 181-residue chain is Protein FAM237A (181 aa).

The first 33 residues, 1–33 (MADPGNRGGIHRPLSFTCSLLIVGMCCVSPFFC), serve as a signal peptide directing secretion. L113 bears the Leucine amide mark. Positions 114-181 (GRRQLVGEEE…GKVNLEIKRK (68 aa)) are cleaved as a propeptide — removed in the mature form.

In terms of processing, the active form requires C-terminal amidation and disulfide bond formation. As to expression, expressed in the pituitary, testis, and heart and at lower levels in the brain.

It localises to the secreted. Functionally, may be capable of activating GPR83 via the GNAQ signaling pathway. This Homo sapiens (Human) protein is Protein FAM237A.